Consider the following 1393-residue polypeptide: DNA-directed RNA polymerase subunit beta' (1393 aa).

The Zn(2+) site is built by Cys72, Cys74, Cys87, and Cys90. The Mg(2+) site is built by Asp463, Asp465, and Asp467. Zn(2+) contacts are provided by Cys812, Cys887, Cys894, and Cys897.

It belongs to the RNA polymerase beta' chain family. The RNAP catalytic core consists of 2 alpha, 1 beta, 1 beta' and 1 omega subunit. When a sigma factor is associated with the core the holoenzyme is formed, which can initiate transcription. It depends on Mg(2+) as a cofactor. Zn(2+) is required as a cofactor.

It carries out the reaction RNA(n) + a ribonucleoside 5'-triphosphate = RNA(n+1) + diphosphate. DNA-dependent RNA polymerase catalyzes the transcription of DNA into RNA using the four ribonucleoside triphosphates as substrates. In Chlamydia caviae (strain ATCC VR-813 / DSM 19441 / 03DC25 / GPIC) (Chlamydophila caviae), this protein is DNA-directed RNA polymerase subunit beta'.